Here is a 263-residue protein sequence, read N- to C-terminus: Small ribosomal subunit protein uS2 (263 aa).

Belongs to the universal ribosomal protein uS2 family. In terms of assembly, component of the small ribosomal subunit. Mature ribosomes consist of a small (40S) and a large (60S) subunit. The 40S subunit contains about 33 different proteins and 1 molecule of RNA (18S). The 60S subunit contains about 49 different proteins and 3 molecules of RNA (25S, 5.8S and 5S). Interacts with RPS21.

It localises to the cytoplasm. In terms of biological role, required for the assembly and/or stability of the 40S ribosomal subunit. Required for the processing of the 20S rRNA-precursor to mature 18S rRNA in a late step of the maturation of 40S ribosomal subunits. The sequence is that of Small ribosomal subunit protein uS2 from Vairimorpha ceranae (strain BRL01) (Microsporidian parasite).